A 436-amino-acid polypeptide reads, in one-letter code: 3-ketoacyl-CoA thiolase (436 aa).

Catalysis depends on C99, which acts as the Acyl-thioester intermediate. Catalysis depends on proton acceptor residues H392 and C422.

The protein belongs to the thiolase-like superfamily. Thiolase family. In terms of assembly, heterotetramer of two alpha chains (FadJ) and two beta chains (FadI).

The protein localises to the cytoplasm. It carries out the reaction an acyl-CoA + acetyl-CoA = a 3-oxoacyl-CoA + CoA. The protein operates within lipid metabolism; fatty acid beta-oxidation. Its function is as follows. Catalyzes the final step of fatty acid oxidation in which acetyl-CoA is released and the CoA ester of a fatty acid two carbons shorter is formed. This is 3-ketoacyl-CoA thiolase from Shewanella putrefaciens (strain CN-32 / ATCC BAA-453).